The chain runs to 113 residues: Endoribonuclease SymE (113 aa).

The 46-residue stretch at 29–74 (GRYPDYSRIPAITLKGQWLEVAGFATGTAVDVKVMEGCIVLTAQPP) folds into the SpoVT-AbrB domain.

It belongs to the SymE family.

Its subcellular location is the cytoplasm. In terms of biological role, involved in the degradation and recycling of damaged RNA. It is itself a target for degradation by the ATP-dependent protease Lon. This Escherichia coli O7:K1 (strain IAI39 / ExPEC) protein is Endoribonuclease SymE.